A 166-amino-acid polypeptide reads, in one-letter code: Disulfide bond formation protein B (166 aa).

Residues 1–11 (MQSFAFSTRAL) lie on the Cytoplasmic side of the membrane. A helical transmembrane segment spans residues 12–28 (FLGLFAVCAGLLGFGLY). Residues 29-46 (LQHAVGLEPCPMCIMQRY) lie on the Periplasmic side of the membrane. A disulfide bridge links cysteine 38 with cysteine 41. Residues 47-63 (AFVAIALTALVAGLHGP) form a helical membrane-spanning segment. The Cytoplasmic portion of the chain corresponds to 64–70 (GRRGTRA). A helical transmembrane segment spans residues 71–87 (YAAVILLLALAGGGVAL). The Periplasmic segment spans residues 88-143 (RQTWMQLYPPEFAECGPDLEFMLGSFPLADALPMIFQGAGDCSKVDWAFLGLSIAN). A disulfide bridge connects residues cysteine 102 and cysteine 129. The chain crosses the membrane as a helical span at residues 144–162 (WSLVCLTLVAVFAIMMIAR). At 163 to 166 (KRGG) the chain is on the cytoplasmic side.

Belongs to the DsbB family.

The protein localises to the cell inner membrane. Required for disulfide bond formation in some periplasmic proteins. Acts by oxidizing the DsbA protein. In Aromatoleum aromaticum (strain DSM 19018 / LMG 30748 / EbN1) (Azoarcus sp. (strain EbN1)), this protein is Disulfide bond formation protein B.